The primary structure comprises 298 residues: Glycine--tRNA ligase alpha subunit (298 aa).

The protein belongs to the class-II aminoacyl-tRNA synthetase family. Tetramer of two alpha and two beta subunits.

The protein resides in the cytoplasm. It catalyses the reaction tRNA(Gly) + glycine + ATP = glycyl-tRNA(Gly) + AMP + diphosphate. This chain is Glycine--tRNA ligase alpha subunit, found in Lacticaseibacillus paracasei (strain ATCC 334 / BCRC 17002 / CCUG 31169 / CIP 107868 / KCTC 3260 / NRRL B-441) (Lactobacillus paracasei).